Consider the following 378-residue polypeptide: UDP-N-acetylenolpyruvoylglucosamine reductase (378 aa).

Positions 15-185 constitute an FAD-binding PCMH-type domain; the sequence is VGGTPERLLE…LSVDLELADH (171 aa). The active site involves R163. S248 (proton donor) is an active-site residue. E370 is a catalytic residue.

Belongs to the MurB family. FAD is required as a cofactor.

The protein localises to the cytoplasm. The catalysed reaction is UDP-N-acetyl-alpha-D-muramate + NADP(+) = UDP-N-acetyl-3-O-(1-carboxyvinyl)-alpha-D-glucosamine + NADPH + H(+). It participates in cell wall biogenesis; peptidoglycan biosynthesis. Cell wall formation. This chain is UDP-N-acetylenolpyruvoylglucosamine reductase, found in Leifsonia xyli subsp. xyli (strain CTCB07).